The following is a 551-amino-acid chain: Arginine--tRNA ligase (551 aa).

Positions 125–135 match the 'HIGH' region motif; it reads ANPTGPLHIGH.

It belongs to the class-I aminoacyl-tRNA synthetase family. As to quaternary structure, monomer.

The protein resides in the cytoplasm. The enzyme catalyses tRNA(Arg) + L-arginine + ATP = L-arginyl-tRNA(Arg) + AMP + diphosphate. This is Arginine--tRNA ligase from Oleidesulfovibrio alaskensis (strain ATCC BAA-1058 / DSM 17464 / G20) (Desulfovibrio alaskensis).